A 342-amino-acid chain; its full sequence is MKAKDIVLKKSEKIEGVEVKGPWLDDAQSLEEVVSYYYRIGFQATHLGRAIEIWRKVEEKRERGEEIRVFLGYTSNIISSGLREIIAWLVKEKKVDVIVTTAGGVEEDFIKSLKPFILGDWEVDDAELRKKGVNRIGNIFVPNDRYIEFEKYMIPFFERVLKIEEKLSRPLTASEFIYEMGRYMDEKLGKEKEKSVIYWAYKNNIPIFCPAITDGSIGDMLYFFKEERRDSRLIIDIANDIVKLNNLAITAKETASIILGGSLPKHAIINANLFRGGTDYAIYISTAVPWDGSLSGAPPREGVSWGKIKAKADYVEVWGDATLIFPILVWMVMKARGQGYAQ.

The Nucleophile role is filled by lysine 307.

It belongs to the deoxyhypusine synthase family. It depends on NAD(+) as a cofactor.

The enzyme catalyses [eIF5A protein]-L-lysine + spermidine = [eIF5A protein]-deoxyhypusine + propane-1,3-diamine. It participates in protein modification; eIF5A hypusination. Functionally, catalyzes the NAD-dependent oxidative cleavage of spermidine and the subsequent transfer of the butylamine moiety of spermidine to the epsilon-amino group of a specific lysine residue of the eIF-5A precursor protein to form the intermediate deoxyhypusine residue. This chain is Probable deoxyhypusine synthase (dys), found in Pyrococcus horikoshii (strain ATCC 700860 / DSM 12428 / JCM 9974 / NBRC 100139 / OT-3).